The following is a 467-amino-acid chain: D-hydantoinase (467 aa).

3 residues coordinate Zn(2+): His-65, His-67, and Lys-156. At Lys-156 the chain carries N6-carboxylysine. Residue Tyr-161 coordinates substrate. Zn(2+)-binding residues include His-189 and His-245. Substrate is bound at residue Ser-294. Zn(2+) is bound at residue Asp-321. Asn-343 contributes to the substrate binding site.

Belongs to the metallo-dependent hydrolases superfamily. Hydantoinase/dihydropyrimidinase family. As to quaternary structure, homotetramer. Zn(2+) serves as cofactor. Post-translationally, carboxylation allows a single lysine to coordinate two zinc ions.

Functionally, catalyzes the stereospecific hydrolysis of the cyclic amide bond of D-hydantoin derivatives. The sequence is that of D-hydantoinase (hyuA) from Streptomyces coelicolor (strain ATCC BAA-471 / A3(2) / M145).